Reading from the N-terminus, the 726-residue chain is Catalase-peroxidase (726 aa).

Residues 1–33 form a disordered region; it reads MSTSDDIHNTTATGKCPFHQGGHDQSAGGGTTT. Positions 105-226 form a cross-link, tryptophyl-tyrosyl-methioninium (Trp-Tyr) (with M-252); the sequence is WHGAGTYRSI…LGATEMGLIY (122 aa). The active-site Proton acceptor is the histidine 106. A cross-link (tryptophyl-tyrosyl-methioninium (Tyr-Met) (with W-105)) is located at residues 226-252; the sequence is YVNPEGPDHSGEPLSAAAAIRATFGNM. Residue histidine 267 coordinates heme b.

It belongs to the peroxidase family. Peroxidase/catalase subfamily. As to quaternary structure, homodimer or homotetramer. Heme b serves as cofactor. Formation of the three residue Trp-Tyr-Met cross-link is important for the catalase, but not the peroxidase activity of the enzyme.

The catalysed reaction is H2O2 + AH2 = A + 2 H2O. It carries out the reaction 2 H2O2 = O2 + 2 H2O. Its function is as follows. Bifunctional enzyme with both catalase and broad-spectrum peroxidase activity. The protein is Catalase-peroxidase of Escherichia coli (strain UTI89 / UPEC).